Reading from the N-terminus, the 182-residue chain is Glutathione-regulated potassium-efflux system ancillary protein KefG (182 aa).

Belongs to the NAD(P)H dehydrogenase (quinone) family. KefG subfamily. In terms of assembly, interacts with KefB.

Its subcellular location is the cell inner membrane. It carries out the reaction a quinone + NADH + H(+) = a quinol + NAD(+). The enzyme catalyses a quinone + NADPH + H(+) = a quinol + NADP(+). Its function is as follows. Regulatory subunit of a potassium efflux system that confers protection against electrophiles. Required for full activity of KefB. The polypeptide is Glutathione-regulated potassium-efflux system ancillary protein KefG (Yersinia pestis bv. Antiqua (strain Nepal516)).